The sequence spans 302 residues: Meiotic recombination protein rec14 (302 aa).

WD repeat units follow at residues 14 to 51 (AHQA…HSLV), 57 to 96 (PHKL…FRDL), 101 to 140 (QHPS…KISE), 142 to 184 (DTKG…HVLS), 185 to 226 (GHTS…GQLR), 227 to 266 (GHAA…CIST), and 269 to 302 (ETDG…AATE).

Component of the DSB catalytic core (DSBC) complex, composed of at least rec12, rec6 and rec14. The complex interacts with mde2.

In terms of biological role, required for formation of the rec12-mediated double-strand breaks (DSBs) that initiate meiotic recombination. In Schizosaccharomyces pombe (strain 972 / ATCC 24843) (Fission yeast), this protein is Meiotic recombination protein rec14.